Reading from the N-terminus, the 77-residue chain is Pi-stichotoxin-Hmg5a (77 aa).

Positions Met1–Ala21 are cleaved as a signal peptide. Positions Leu22–Gln34 are excised as a propeptide. 3 cysteine pairs are disulfide-bonded: Cys40–Cys73, Cys42–Cys66, and Cys56–Cys74.

This sequence belongs to the sea anemone type 3 (BDS) potassium channel toxin family.

The protein localises to the secreted. It is found in the nematocyst. Functionally, toxin that inhibits rat ASIC3 channels (IC(50)=13.8 uM). Also able to bind T.californica muscle-type nicotinic acetylcholine receptors (nAChR), and human alpha-7/CHRNA7 nicotinic acetylcholine receptors. The protein is Pi-stichotoxin-Hmg5a of Heteractis magnifica (Magnificent sea anemone).